The following is an 82-amino-acid chain: Large ribosomal subunit protein bL28 (82 aa).

Residues 1–25 (MAKVDQITKKRAMTGNTRSHALNHS) are disordered.

The protein belongs to the bacterial ribosomal protein bL28 family.

The protein is Large ribosomal subunit protein bL28 of Malacoplasma penetrans (strain HF-2) (Mycoplasma penetrans).